The following is a 479-amino-acid chain: Ribosomal protein uS12 methylthiotransferase RimO (479 aa).

The segment at methionine 1 to serine 34 is disordered. The span at threonine 15–proline 25 shows a compositional bias: polar residues. Residues asparagine 39–proline 151 form the MTTase N-terminal domain. [4Fe-4S] cluster-binding residues include cysteine 48, cysteine 84, cysteine 113, cysteine 184, cysteine 188, and cysteine 191. The 238-residue stretch at leucine 170–alanine 407 folds into the Radical SAM core domain. Positions lysine 410–glutamate 476 constitute a TRAM domain.

It belongs to the methylthiotransferase family. RimO subfamily. Requires [4Fe-4S] cluster as cofactor.

The protein localises to the cytoplasm. The catalysed reaction is L-aspartate(89)-[ribosomal protein uS12]-hydrogen + (sulfur carrier)-SH + AH2 + 2 S-adenosyl-L-methionine = 3-methylsulfanyl-L-aspartate(89)-[ribosomal protein uS12]-hydrogen + (sulfur carrier)-H + 5'-deoxyadenosine + L-methionine + A + S-adenosyl-L-homocysteine + 2 H(+). Functionally, catalyzes the methylthiolation of an aspartic acid residue of ribosomal protein uS12. The chain is Ribosomal protein uS12 methylthiotransferase RimO from Saccharophagus degradans (strain 2-40 / ATCC 43961 / DSM 17024).